The primary structure comprises 221 residues: Cytidylate kinase (221 aa).

7–15 (GPSASGKSS) is a binding site for ATP.

The protein belongs to the cytidylate kinase family. Type 1 subfamily.

Its subcellular location is the cytoplasm. It catalyses the reaction CMP + ATP = CDP + ADP. The enzyme catalyses dCMP + ATP = dCDP + ADP. The sequence is that of Cytidylate kinase from Borreliella burgdorferi (strain ZS7) (Borrelia burgdorferi).